Reading from the N-terminus, the 238-residue chain is Small ribosomal subunit protein uS2c (238 aa).

It belongs to the universal ribosomal protein uS2 family.

The protein resides in the plastid. It localises to the chloroplast. The polypeptide is Small ribosomal subunit protein uS2c (rps2) (Nuphar advena (Common spatterdock)).